Here is a 156-residue protein sequence, read N- to C-terminus: SsrA-binding protein (156 aa).

This sequence belongs to the SmpB family.

Its subcellular location is the cytoplasm. Its function is as follows. Required for rescue of stalled ribosomes mediated by trans-translation. Binds to transfer-messenger RNA (tmRNA), required for stable association of tmRNA with ribosomes. tmRNA and SmpB together mimic tRNA shape, replacing the anticodon stem-loop with SmpB. tmRNA is encoded by the ssrA gene; the 2 termini fold to resemble tRNA(Ala) and it encodes a 'tag peptide', a short internal open reading frame. During trans-translation Ala-aminoacylated tmRNA acts like a tRNA, entering the A-site of stalled ribosomes, displacing the stalled mRNA. The ribosome then switches to translate the ORF on the tmRNA; the nascent peptide is terminated with the 'tag peptide' encoded by the tmRNA and targeted for degradation. The ribosome is freed to recommence translation, which seems to be the essential function of trans-translation. This chain is SsrA-binding protein, found in Staphylococcus epidermidis (strain ATCC 35984 / DSM 28319 / BCRC 17069 / CCUG 31568 / BM 3577 / RP62A).